We begin with the raw amino-acid sequence, 248 residues long: Metallo-beta-lactamase type 2 (248 aa).

The N-terminal stretch at 1 to 21 (MKGLKGLLVLALGFTGLQVFG) is a signal peptide. Positions 97, 99, 101, 160, and 179 each coordinate Zn(2+). Position 182 (lysine 182) interacts with substrate. Histidine 221 is a Zn(2+) binding site.

The protein belongs to the metallo-beta-lactamase superfamily. Class-B beta-lactamase family. In terms of assembly, monomer. It depends on Zn(2+) as a cofactor.

The protein localises to the periplasm. The catalysed reaction is a beta-lactam + H2O = a substituted beta-amino acid. Functionally, confers resistance to the different beta-lactams antibiotics (penicillin, cephalosporin and carbapenem) via the hydrolysis of the beta-lactam ring. This chain is Metallo-beta-lactamase type 2 (blaB8), found in Elizabethkingia meningoseptica (Chryseobacterium meningosepticum).